Consider the following 98-residue polypeptide: Prolactin-releasing peptide (98 aa).

The N-terminal stretch at 1–22 is a signal peptide; it reads MKAVGAWLLCLLLLGLALQGAA. 2 disordered regions span residues 52–71 and 79–98; these read RFGRRRAAPGDGPRPGPRRV and GGAEPSRALPGRLTAQLVQE. A Phenylalanine amide modification is found at Phe53. The propeptide occupies 58–98; it reads AAPGDGPRPGPRRVPACFRLEGGAEPSRALPGRLTAQLVQE.

Post-translationally, amidation of C-terminus is required for receptor interaction. As to expression, medulla oblongata and hypothalamus.

It is found in the secreted. Functionally, stimulates prolactin (PRL) release and regulates the expression of prolactin through its receptor GPR10. May stimulate lactotrophs directly to secrete PRL. The protein is Prolactin-releasing peptide (PRLH) of Bos taurus (Bovine).